Consider the following 207-residue polypeptide: Outer-membrane lipoprotein LolB (207 aa).

A signal peptide spans 1-21 (MPQRKISFYRLLPLATLLLAA). Cys22 is lipidated: N-palmitoyl cysteine. A lipid anchor (S-diacylglycerol cysteine) is attached at Cys22.

This sequence belongs to the LolB family. In terms of assembly, monomer.

It localises to the cell outer membrane. Its function is as follows. Plays a critical role in the incorporation of lipoproteins in the outer membrane after they are released by the LolA protein. This Yersinia enterocolitica serotype O:8 / biotype 1B (strain NCTC 13174 / 8081) protein is Outer-membrane lipoprotein LolB.